A 188-amino-acid polypeptide reads, in one-letter code: Elongation factor P-like protein (188 aa).

This sequence belongs to the elongation factor P family.

In Xanthomonas axonopodis pv. citri (strain 306), this protein is Elongation factor P-like protein.